The primary structure comprises 257 residues: UPF0246 protein Shal_1126 (257 aa).

This sequence belongs to the UPF0246 family.

This Shewanella halifaxensis (strain HAW-EB4) protein is UPF0246 protein Shal_1126.